The sequence spans 488 residues: Cysteine--tRNA ligase (488 aa).

Cysteine 28 contacts Zn(2+). The 'HIGH' region motif lies at 30–40 (PTVYDDAHLGH). Zn(2+) contacts are provided by cysteine 209, histidine 239, and glutamate 243. Positions 271-275 (KMSKS) match the 'KMSKS' region motif. Lysine 274 contacts ATP.

It belongs to the class-I aminoacyl-tRNA synthetase family. As to quaternary structure, monomer. Requires Zn(2+) as cofactor.

The protein localises to the cytoplasm. The catalysed reaction is tRNA(Cys) + L-cysteine + ATP = L-cysteinyl-tRNA(Cys) + AMP + diphosphate. This Helicobacter hepaticus (strain ATCC 51449 / 3B1) protein is Cysteine--tRNA ligase.